Reading from the N-terminus, the 207-residue chain is Urease accessory protein UreG (207 aa).

14–21 (GPVGSGKT) is a binding site for GTP.

The protein belongs to the SIMIBI class G3E GTPase family. UreG subfamily. Homodimer. UreD, UreF and UreG form a complex that acts as a GTP-hydrolysis-dependent molecular chaperone, activating the urease apoprotein by helping to assemble the nickel containing metallocenter of UreC. The UreE protein probably delivers the nickel.

Its subcellular location is the cytoplasm. Facilitates the functional incorporation of the urease nickel metallocenter. This process requires GTP hydrolysis, probably effectuated by UreG. The polypeptide is Urease accessory protein UreG (Rhodopseudomonas palustris (strain BisB18)).